Here is a 579-residue protein sequence, read N- to C-terminus: Trehalase (579 aa).

Positions Met-1 to Ala-15 are cleaved as a signal peptide. N-linked (GlcNAc...) asparagine glycosylation is found at Asn-29 and Asn-58. Substrate-binding positions include Arg-161, Trp-168–Asp-169, Asn-205, Arg-214–Gln-216, Arg-279–Glu-281, and Gly-313. N-linked (GlcNAc...) asparagine glycosylation is present at Asn-205. The active-site Proton donor/acceptor is the Asp-315. Residue Asn-331 is glycosylated (N-linked (GlcNAc...) asparagine). The active-site Proton donor/acceptor is the Glu-513. Glu-528 is a substrate binding site. The segment covering Asp-560–Asn-569 has biased composition (polar residues). The segment at Asp-560–Lys-579 is disordered.

The protein belongs to the glycosyl hydrolase 37 family. As to expression, in midgut and Malpighian tubules.

It is found in the basolateral cell membrane. It carries out the reaction alpha,alpha-trehalose + H2O = alpha-D-glucose + beta-D-glucose. Its function is as follows. Involved in uptake of hemolymph trehalose into epithelial cells in the midgut of feeding larvae. This Bombyx mori (Silk moth) protein is Trehalase.